The sequence spans 213 residues: MSKTVGASRFRPAGWLQRAGYAPQVFVFRNLESGQVIYSQLPTFTERQINKNFYRPNWENRKPSTRPDIWKCMAVVDLASHEESVRLYQNLCRLRYLREVPQRKAAEQLRKRNEFGHIWYSAQYRPTYTQEAVADLRECLLRARGGATVHWEDPWRMGDRAKHWAALPAVQHQFLPRMANVAREESAILKQLGERAKRAFAAPAPPAPAPQSL.

This sequence belongs to the mitochondrion-specific ribosomal protein mL67 family.

The protein localises to the nucleus. It is found in the mitochondrion. In terms of biological role, transcription factor involved in regulation of RNA polymerase II-dependent transcription. Also involved in regulation of mitochondrial DNA recombination, maintenance and repair, and generation of homoplasmic cells. The polypeptide is Large ribosomal subunit protein mL67 (MHR1) (Eremothecium gossypii (strain ATCC 10895 / CBS 109.51 / FGSC 9923 / NRRL Y-1056) (Yeast)).